Reading from the N-terminus, the 347-residue chain is NADH-ubiquinone oxidoreductase chain 2 (347 aa).

11 helical membrane-spanning segments follow: residues 1 to 21 (MNPL…LITA), 25 to 45 (HWFL…PVLT), 55 to 75 (AAIK…MAIL), 96 to 116 (LMIL…FWVP), 123 to 143 (TLTS…SIMY), 145 to 165 (IFPV…IMVG), 178 to 198 (ILAY…PYNP), 199 to 219 (NITI…FLAL), 237 to 257 (LTWL…LPPL), 274 to 294 (GTLI…YFYM), and 324 to 344 (LLLP…PLTF).

The protein belongs to the complex I subunit 2 family. As to quaternary structure, core subunit of respiratory chain NADH dehydrogenase (Complex I) which is composed of 45 different subunits. Interacts with TMEM242.

The protein resides in the mitochondrion inner membrane. The catalysed reaction is a ubiquinone + NADH + 5 H(+)(in) = a ubiquinol + NAD(+) + 4 H(+)(out). In terms of biological role, core subunit of the mitochondrial membrane respiratory chain NADH dehydrogenase (Complex I) which catalyzes electron transfer from NADH through the respiratory chain, using ubiquinone as an electron acceptor. Essential for the catalytic activity and assembly of complex I. This Symphalangus syndactylus (Siamang) protein is NADH-ubiquinone oxidoreductase chain 2.